A 402-amino-acid chain; its full sequence is Galactoside 2-alpha-L-fucosyltransferase (402 aa).

The Cytoplasmic segment spans residues 1–6 (MRYNSN). A helical; Signal-anchor for type II membrane protein membrane pass occupies residues 7–27 (YLMYFCLVLGIFANIYVIIKI). Residues 28–402 (TLGSSHILEY…TDLNGKISKY (375 aa)) lie on the Lumenal side of the membrane. N-linked (GlcNAc...) asparagine glycosylation is found at asparagine 119, asparagine 175, and asparagine 301.

This sequence belongs to the glycosyltransferase 11 family. In terms of assembly, may form oligomers. N-glycosylated. As to expression, expression is restricted to pharyngeal neurons and gland cells.

It localises to the golgi apparatus. The protein resides in the golgi stack membrane. The protein operates within protein modification; protein glycosylation. Functionally, selectively catalyzes the addition of fucose in alpha 1-2 linkage to Gal-beta-(1-&gt;3)-GalNAc-alpha-R, Gal-beta-(1-&gt;3)-(GlcNAc-beta-(1-&gt;6))-GalNAc-alpha-R and Gal-beta-(1-&gt;3)-GalNAc acceptors but not Gal-beta-(1-&gt;3)-GlcNAc-beta-(1-&gt;3)-Gal-beta-(1-&gt;4)-Glc in vitro. This chain is Galactoside 2-alpha-L-fucosyltransferase, found in Caenorhabditis elegans.